The sequence spans 238 residues: Large ribosomal subunit protein uL1 (238 aa).

Belongs to the universal ribosomal protein uL1 family. Part of the 50S ribosomal subunit.

Functionally, binds directly to 23S rRNA. The L1 stalk is quite mobile in the ribosome, and is involved in E site tRNA release. Its function is as follows. Protein L1 is also a translational repressor protein, it controls the translation of the L11 operon by binding to its mRNA. The polypeptide is Large ribosomal subunit protein uL1 (Picosynechococcus sp. (strain ATCC 27264 / PCC 7002 / PR-6) (Agmenellum quadruplicatum)).